The following is a 160-amino-acid chain: Cytochrome b6-f complex subunit 4 (160 aa).

3 helical membrane passes run 36-56 (LLYI…GLAV), 95-115 (LLGV…PFLE), and 131-151 (TVFL…TLPI).

It belongs to the cytochrome b family. PetD subfamily. As to quaternary structure, the 4 large subunits of the cytochrome b6-f complex are cytochrome b6, subunit IV (17 kDa polypeptide, petD), cytochrome f and the Rieske protein, while the 4 small subunits are petG, petL, petM and petN. The complex functions as a dimer.

It localises to the plastid. It is found in the chloroplast thylakoid membrane. Functionally, component of the cytochrome b6-f complex, which mediates electron transfer between photosystem II (PSII) and photosystem I (PSI), cyclic electron flow around PSI, and state transitions. The sequence is that of Cytochrome b6-f complex subunit 4 from Coffea arabica (Arabian coffee).